We begin with the raw amino-acid sequence, 130 residues long: MKIPADLYYSPSHEWVRVEGDQAWIGISDYAQHELGDIVFVEMPEPDDELEAGGQLGVIESVKAASTIYSPVGGTVVAINEELEDAPQLINEDPYANYIVVVAMNNPGDLDNLLSAAAYEELCQKEQGGE.

In terms of domain architecture, Lipoyl-binding spans 22 to 103; that stretch reads QAWIGISDYA…PYANYIVVVA (82 aa). Residue lysine 63 is modified to N6-lipoyllysine.

Belongs to the GcvH family. As to quaternary structure, the glycine cleavage system is composed of four proteins: P, T, L and H. (R)-lipoate is required as a cofactor.

In terms of biological role, the glycine cleavage system catalyzes the degradation of glycine. The H protein shuttles the methylamine group of glycine from the P protein to the T protein. In Syntrophomonas wolfei subsp. wolfei (strain DSM 2245B / Goettingen), this protein is Glycine cleavage system H protein.